We begin with the raw amino-acid sequence, 310 residues long: M1-specific T cell receptor beta chain (310 aa).

The N-terminal stretch at 1-21 (MSNQVLCCVVLCLLGANTVDG) is a signal peptide. Residues 22 to 114 (GITQSPKYLF…TAFYLCASSI (93 aa)) form a t cell receptor beta variable 19 region. An Ig-like V-type domain is found at 34–131 (EGQNVTLSCE…FGPGTRLTVT (98 aa)). An N-linked (GlcNAc...) asparagine glycan is attached at N37. A disulfide bridge links C42 with C110. The segment at 46–50 (LNHDA) is CDR1. D49 contributes to the a peptide antigen binding site. The tract at residues 68–73 (SQIVND) is CDR2. Positions 110-122 (CASSIRSSYEQYF) are CDR3. Residues 117 to 131 (SYEQYFGPGTRLTVT) are t cell receptor beta joining 2-7. The segment at 133-310 (DLKNVFPPKV…AMVKRKDSRG (178 aa)) is t cell receptor beta constant 2. The Ig-like C1-type domain maps to 140-249 (PKVAVFEPSE…WTQDRAKPVT (110 aa)). C162 and C227 are joined by a disulfide. N201 carries N-linked (GlcNAc...) asparagine glycosylation. Residues 262-276 (CGFTSESYQQGVLSA) form a connecting peptide region. A helical transmembrane segment spans residues 277-299 (TILYEILLGKATLYAVLVSALVL). Residues 300–310 (MAMVKRKDSRG) are Cytoplasmic-facing.

Disulfide-linked heterodimer with TRAV27*01J42*01C*01 alpha chain. The TR primarily interacts via its CDR3-beta domain with M/matrix protein 1-derived peptide (GILGFVFTL) displayed by HLA-A*02.01 in a 'peg-notch' recognition mode. The alpha-beta TR associates with the transmembrane signaling CD3 coreceptor proteins to form the TR-CD3 (TCR). The assembly of alpha-beta TR heterodimers with CD3 occurs in the endoplasmic reticulum where a single alpha-beta TR heterodimer associates with one CD3D-CD3E heterodimer, one CD3G-CD3E heterodimer and one CD247 homodimer forming a stable octameric structure. CD3D-CD3E and CD3G-CD3E heterodimers preferentially associate with TR alpha and TR beta chains (via TM domain), respectively. The association of the CD247 homodimer is the last step of TCR assembly in the endoplasmic reticulum and is required for transport to the cell surface. As to expression, expressed in M/matrix protein 1-specific effector memory CD8-positive T cells readily detectable in the peripheral blood, secondary lymphoid organs and lung (primary site of infection) of IAV infected individuals.

It localises to the cell membrane. The beta chain of TRAV27*01J42*01C*01/TRBV19*01J2S7*01C*02 alpha-beta T cell receptor (TR) clonotype that is specific for HLA-A*02:01-restricted M/matrix protein 1 immunodominant epitope GILGFVFTL of influenza A virus (IAV). Classified as a public TCR clonotype, it is preferentially selected in effector memory CD8-positive T cells among multiple HLA-A*02:01 carriers/individuals and confers long-lived immunity against IAV infection. Can cross-recognize sporadically emerging IAV variants by molecular mimicry, inducing immunity toward different influenza strains. Antigen recognition initiates TR-CD3 clustering on the cell surface and intracellular activation of LCK that phosphorylates the ITAM motifs of CD3G, CD3D, CD3E and CD247 enabling the recruitment of ZAP70. In turn, ZAP70 phosphorylates LAT, which recruits numerous signaling molecules to form the LAT signalosome. The LAT signalosome propagates signal branching to three major signaling pathways, the calcium, the mitogen-activated protein kinase (MAPK) kinase and the nuclear factor NF-kappa-B (NF-kB) pathways, leading to the mobilization of transcription factors that are critical for gene expression and essential for T cell differentiation into effector/memory T cells. In Homo sapiens (Human), this protein is M1-specific T cell receptor beta chain.